A 267-amino-acid chain; its full sequence is Trehalose 2-sulfotransferase (267 aa).

Alpha,alpha-trehalose contacts are provided by residues Q14, 33–39 (EPQEFFQ), P48, and W53. Residue E36 is the Proton acceptor of the active site.

Belongs to the Stf0 sulfotransferase family. Homodimer.

It carries out the reaction alpha,alpha-trehalose + 3'-phosphoadenylyl sulfate = 2-O-sulfo-alpha,alpha-trehalose + adenosine 3',5'-bisphosphate + H(+). The protein operates within glycolipid metabolism. Catalyzes the sulfuryl group transfer from 3'-phosphoadenosine-5'-phosphosulfate (PAPS) to trehalose, leading to trehalose-2-sulfate (T2S). The sulfation of trehalose is the first step in the biosynthesis of sulfolipid-1 (SL-1), a major cell wall glycolipid in pathogenic mycobacteria. Cannot use free glucose and unnatural stereoisomers of trehalose (alpha,beta (neo-trehalose) and beta,beta (iso-trehalose)) as substrates. This Mycolicibacterium smegmatis (strain ATCC 700084 / mc(2)155) (Mycobacterium smegmatis) protein is Trehalose 2-sulfotransferase.